The chain runs to 335 residues: SLAM family member 7 (335 aa).

The signal sequence occupies residues 1–22; it reads MAGSPTCLTLIYILWQLTGSAA. In terms of domain architecture, Ig-like V-type spans 23–124; that stretch reads SGPVKELVGS…PSTQEYVLHV (102 aa). Over 23 to 226 the chain is Extracellular; that stretch reads SGPVKELVGS…GAADDPDSSM (204 aa). 6 N-linked (GlcNAc...) asparagine glycosylation sites follow: N98, N142, N148, N172, N176, and N204. The Ig-like C2-type domain occupies 131-206; it reads PKVTMGLQSN…ARNPVSRNFS (76 aa). Disulfide bonds link C145-C215 and C151-C195. Residues 227–247 form a helical membrane-spanning segment; sequence VLLCLLLVPLLLSLFVLGLFL. The Cytoplasmic portion of the chain corresponds to 248 to 335; that stretch reads WFLKRERQEE…PRLFAYENVI (88 aa). Residues 278–296 form an interaction with FYN when phosphorylated at Tyr-284 region; sequence SGENTEYDTIPHTNRTILK. An ITSM motif is present at residues 302-307; it reads TVYSTV.

In terms of assembly, isoform 1 binds to SH2D1A when its cytoplasmic tail is phosphorylated in the presence of FYN (in vitro); low affinity binding, the physiological relevance of the interaction is questioned. Interacts with SH2D1B; in NK cells. Interacts (via ITSM phosphorylated on Tyr-302) with SH2D1B, PTPN6/SHP-1, PTPN11/SHP-2, INPP5D/SHIP1, CSK and FYN. Expressed in spleen, lymph node, peripheral blood leukocytes, bone marrow, small intestine, stomach, appendix, lung and trachea. Expression was detected in NK cells, activated B-cells, NK-cell line but not in promyelocytic, B-, or T-cell lines. Expressed in monocytes. Isoform 3 is expressed at much lower level than isoform 1.

It localises to the membrane. In terms of biological role, self-ligand receptor of the signaling lymphocytic activation molecule (SLAM) family. SLAM receptors triggered by homo- or heterotypic cell-cell interactions are modulating the activation and differentiation of a wide variety of immune cells and thus are involved in the regulation and interconnection of both innate and adaptive immune response. Activities are controlled by presence or absence of small cytoplasmic adapter proteins, SH2D1A/SAP and/or SH2D1B/EAT-2. Isoform 1 mediates NK cell activation through a SH2D1A-independent extracellular signal-regulated ERK-mediated pathway. Positively regulates NK cell functions by a mechanism dependent on phosphorylated SH2D1B. Downstream signaling implicates PLCG1, PLCG2 and PI3K. In addition to heterotypic NK cells-target cells interactions also homotypic interactions between NK cells may contribute to activation. However, in the absence of SH2D1B, inhibits NK cell function. Also acts inhibitory in T-cells. May play a role in lymphocyte adhesion. In LPS-activated monocytes negatively regulates production of pro-inflammatory cytokines. Its function is as follows. Isoform 3 does not mediate any NK cell activation. In Homo sapiens (Human), this protein is SLAM family member 7 (SLAMF7).